We begin with the raw amino-acid sequence, 118 residues long: Small ribosomal subunit protein uS13 (118 aa).

The interval 93 to 118 is disordered; that stretch reads RGLPVRGQRTKTNARTRKGPRKPIRK.

It belongs to the universal ribosomal protein uS13 family. In terms of assembly, part of the 30S ribosomal subunit. Forms a loose heterodimer with protein S19. Forms two bridges to the 50S subunit in the 70S ribosome.

Its function is as follows. Located at the top of the head of the 30S subunit, it contacts several helices of the 16S rRNA. In the 70S ribosome it contacts the 23S rRNA (bridge B1a) and protein L5 of the 50S subunit (bridge B1b), connecting the 2 subunits; these bridges are implicated in subunit movement. Contacts the tRNAs in the A and P-sites. The protein is Small ribosomal subunit protein uS13 of Pseudomonas paraeruginosa (strain DSM 24068 / PA7) (Pseudomonas aeruginosa (strain PA7)).